Consider the following 136-residue polypeptide: Peptide deformylase (136 aa).

Residues cysteine 85 and histidine 126 each coordinate Fe cation. Residue glutamate 127 is part of the active site. Fe cation is bound at residue histidine 130.

Belongs to the polypeptide deformylase family. Requires Fe(2+) as cofactor.

The catalysed reaction is N-terminal N-formyl-L-methionyl-[peptide] + H2O = N-terminal L-methionyl-[peptide] + formate. Its function is as follows. Removes the formyl group from the N-terminal Met of newly synthesized proteins. Requires at least a dipeptide for an efficient rate of reaction. N-terminal L-methionine is a prerequisite for activity but the enzyme has broad specificity at other positions. This is Peptide deformylase from Clostridium beijerinckii (strain ATCC 51743 / NCIMB 8052) (Clostridium acetobutylicum).